We begin with the raw amino-acid sequence, 313 residues long: MTTTPNTPLPNSLQKPLERFYEFLRSEKGLSLHTQRNYKQQLETMAHHLAEMGLKDWSQVDAGWVRQLAGKGMREGMKASSLATRLSSLRSFFDFLILRGEMLANPAKGVSAPRKKRPLPKNLDVDEVNQLLEVNEDDPLAVRDRAMMELMYGAGLRLAELVSVDVRDVQLRSGELRVIGKGDKERKVPFSGMATEWVGKWLRVRGDLAAPGEPALFVSKLGTRISHRSVQKRMAEWGQKQSVASHISPHKLRHSFATHMLESSNNLRAVQELLGHENISTTQIYTHLDFQHLAQAYDQAHPRARKRNDDKSD.

The region spanning 11–97 (NSLQKPLERF…SLRSFFDFLI (87 aa)) is the Core-binding (CB) domain. In terms of domain architecture, Tyr recombinase spans 118–298 (PLPKNLDVDE…DFQHLAQAYD (181 aa)). Residues R157, K181, H250, R253, and H276 contribute to the active site. The active-site O-(3'-phospho-DNA)-tyrosine intermediate is Y285.

Belongs to the 'phage' integrase family. XerC subfamily. As to quaternary structure, forms a cyclic heterotetrameric complex composed of two molecules of XerC and two molecules of XerD.

It localises to the cytoplasm. Functionally, site-specific tyrosine recombinase, which acts by catalyzing the cutting and rejoining of the recombining DNA molecules. The XerC-XerD complex is essential to convert dimers of the bacterial chromosome into monomers to permit their segregation at cell division. It also contributes to the segregational stability of plasmids. This Vibrio campbellii (strain ATCC BAA-1116) protein is Tyrosine recombinase XerC.